Consider the following 363-residue polypeptide: Biotin synthase (363 aa).

Positions asparagine 38 to arginine 266 constitute a Radical SAM core domain. Residues cysteine 53, cysteine 57, and cysteine 60 each coordinate [4Fe-4S] cluster. Positions 97, 129, 189, and 261 each coordinate [2Fe-2S] cluster. The segment at lysine 315–alanine 363 is disordered. The segment covering alanine 316 to leucine 353 has biased composition (basic and acidic residues). The span at glutamate 354–alanine 363 shows a compositional bias: polar residues.

The protein belongs to the radical SAM superfamily. Biotin synthase family. As to quaternary structure, homodimer. [4Fe-4S] cluster is required as a cofactor. It depends on [2Fe-2S] cluster as a cofactor.

The catalysed reaction is (4R,5S)-dethiobiotin + (sulfur carrier)-SH + 2 reduced [2Fe-2S]-[ferredoxin] + 2 S-adenosyl-L-methionine = (sulfur carrier)-H + biotin + 2 5'-deoxyadenosine + 2 L-methionine + 2 oxidized [2Fe-2S]-[ferredoxin]. The protein operates within cofactor biosynthesis; biotin biosynthesis; biotin from 7,8-diaminononanoate: step 2/2. Functionally, catalyzes the conversion of dethiobiotin (DTB) to biotin by the insertion of a sulfur atom into dethiobiotin via a radical-based mechanism. The sequence is that of Biotin synthase from Christiangramia forsetii (strain DSM 17595 / CGMCC 1.15422 / KT0803) (Gramella forsetii).